A 181-amino-acid polypeptide reads, in one-letter code: MSSNINIVEAPEGVTGEGFFATKLNDVVGLARANSMWPLPFATSCCGIEFMATMASHYDLARFGSERVSFSPRQADMLMVMGTISKKMAPILRQVYEQMAEPRWVIAVGACASSGGIFDTYSVLQGIDKVIPVDVYVPGCPPRPEQIVDGVMRLQELVKSESVRRRSSPEYQELLASYNIK.

4 residues coordinate [4Fe-4S] cluster: C45, C46, C111, and C140.

It belongs to the complex I 20 kDa subunit family. As to quaternary structure, NDH-1 is composed of 14 different subunits. Subunits NuoB, C, D, E, F, and G constitute the peripheral sector of the complex. [4Fe-4S] cluster is required as a cofactor.

The protein localises to the cell inner membrane. It carries out the reaction a quinone + NADH + 5 H(+)(in) = a quinol + NAD(+) + 4 H(+)(out). In terms of biological role, NDH-1 shuttles electrons from NADH, via FMN and iron-sulfur (Fe-S) centers, to quinones in the respiratory chain. The immediate electron acceptor for the enzyme in this species is believed to be a menaquinone. Couples the redox reaction to proton translocation (for every two electrons transferred, four hydrogen ions are translocated across the cytoplasmic membrane), and thus conserves the redox energy in a proton gradient. The sequence is that of NADH-quinone oxidoreductase subunit B from Flavobacterium psychrophilum (strain ATCC 49511 / DSM 21280 / CIP 103535 / JIP02/86).